The sequence spans 1053 residues: Serine/threonine-protein phosphatase 6 regulatory ankyrin repeat subunit A (1053 aa).

27 ANK repeats span residues 40–69 (EKRT…RVNA), 73–102 (KWLT…DVNA), 106–135 (NWQT…NVNV), 139–168 (AGRT…NINA), 172–201 (KDRR…EVTC), 205–234 (KSYT…DMNE), 238–267 (YGNT…NVNQ), 271–301 (KGFT…DVNM), 305–334 (DGKT…VIDC), 338–367 (NGNT…DTAK), 371–400 (HGMF…DIDT), 404–433 (FGRT…DFNK), 437–466 (FGRS…SVND), 470–500 (RGCT…NPGI), 504–534 (QGYN…DVLM), 549–578 (ATIS…DLDV), 582–611 (SGRT…SILV), 616–645 (LKRT…PQNA), 652–681 (NGQT…NVDA), 685–714 (WGRT…KCLL), 718–747 (RGRT…SVDA), 755–786 (HGYT…KIDG), 788–817 (AFSP…SIVN), 822–851 (KGRT…QVNS), 855–885 (TGKT…DLTL), 889–918 (SKNT…DRNL), and 925–954 (ALQT…SVLA). S1007 and S1011 each carry phosphoserine.

In terms of assembly, protein phosphatase 6 (PP6) holoenzyme is proposed to be a heterotrimeric complex formed by the catalytic subunit, a SAPS domain-containing subunit (PP6R) and an ankyrin repeat-domain containing regulatory subunit (ARS). Interacts with PPP1C and HNRPK. Interacts with PPP6C, PPP6R1 and PPP6R3. Post-translationally, ubiquitinated by the ECS(RAB40C) complex leading to its degradation and decreased PP6 activity. Widely expressed (at protein level).

It localises to the nucleus. The protein localises to the nucleoplasm. Its subcellular location is the cytoplasm. It is found in the cytosol. The protein resides in the cell projection. It localises to the lamellipodium. Functionally, putative regulatory subunit of protein phosphatase 6 (PP6) that may be involved in the recognition of phosphoprotein substrates. Involved in the PP6-mediated dephosphorylation of NFKBIE opposing its degradation in response to TNF-alpha. Selectively inhibits the phosphatase activity of PPP1C. Targets PPP1C to modulate HNRPK phosphorylation. Involved in the PP6-mediated dephosphorylation of MOB1 and induced focal adhesion assembly during cell migration. The polypeptide is Serine/threonine-protein phosphatase 6 regulatory ankyrin repeat subunit A (Ankrd28) (Mus musculus (Mouse)).